We begin with the raw amino-acid sequence, 299 residues long: Glutamyl-Q tRNA(Asp) synthetase (299 aa).

L-glutamate is bound by residues Arg-18–Ser-22 and Glu-54. Residues Pro-21–Ser-31 carry the 'HIGH' region motif. Positions 110, 112, 124, and 128 each coordinate Zn(2+). Positions 181 and 199 each coordinate L-glutamate. Positions Lys-237 to Gln-241 match the 'KMSKS' region motif. Lys-240 is a binding site for ATP.

It belongs to the class-I aminoacyl-tRNA synthetase family. GluQ subfamily. Zn(2+) is required as a cofactor.

Catalyzes the tRNA-independent activation of glutamate in presence of ATP and the subsequent transfer of glutamate onto a tRNA(Asp). Glutamate is transferred on the 2-amino-5-(4,5-dihydroxy-2-cyclopenten-1-yl) moiety of the queuosine in the wobble position of the QUC anticodon. In Shewanella oneidensis (strain ATCC 700550 / JCM 31522 / CIP 106686 / LMG 19005 / NCIMB 14063 / MR-1), this protein is Glutamyl-Q tRNA(Asp) synthetase.